Consider the following 220-residue polypeptide: Deoxyribose-phosphate aldolase (220 aa).

Asp-89 acts as the Proton donor/acceptor in catalysis. Lys-151 serves as the catalytic Schiff-base intermediate with acetaldehyde. Catalysis depends on Lys-180, which acts as the Proton donor/acceptor.

This sequence belongs to the DeoC/FbaB aldolase family. DeoC type 1 subfamily.

It is found in the cytoplasm. It catalyses the reaction 2-deoxy-D-ribose 5-phosphate = D-glyceraldehyde 3-phosphate + acetaldehyde. It functions in the pathway carbohydrate degradation; 2-deoxy-D-ribose 1-phosphate degradation; D-glyceraldehyde 3-phosphate and acetaldehyde from 2-deoxy-alpha-D-ribose 1-phosphate: step 2/2. Functionally, catalyzes a reversible aldol reaction between acetaldehyde and D-glyceraldehyde 3-phosphate to generate 2-deoxy-D-ribose 5-phosphate. This chain is Deoxyribose-phosphate aldolase, found in Streptococcus pneumoniae serotype 4 (strain ATCC BAA-334 / TIGR4).